Reading from the N-terminus, the 193-residue chain is LOB domain-containing protein 12 (193 aa).

Residues serine 7–isoleucine 108 enclose the LOB domain.

This sequence belongs to the LOB domain-containing protein family. In terms of tissue distribution, expressed predominantly in roots, and at low levels in shoots, floral stems and open flowers.

In Arabidopsis thaliana (Mouse-ear cress), this protein is LOB domain-containing protein 12 (LBD12).